Reading from the N-terminus, the 77-residue chain is Large ribosomal subunit protein eL14 (77 aa).

The protein belongs to the eukaryotic ribosomal protein eL14 family.

The chain is Large ribosomal subunit protein eL14 from Methanococcus maripaludis (strain C5 / ATCC BAA-1333).